The sequence spans 481 residues: MPQSNHYSHQSRSHNDRRRQQPDEKVQATVNIGQRFPLTIRRLGINGEGIGYYKHVITFVKGALPEEVVVAEVTAVHPRYLEAKIRSIRKPSPDRVDPRDAYAGEVGGFELEHLDYPAQLAFKQDLIRQALEKYRPAGYRHYDVRPTIGMTNPYEYRNKAQFQVRLIDGHVAAGLYKENSHDLVDLPTCSVQMPATMTVMRQVVAWLEELQVPIYDEEHNSGIVKTIVVREAAATGEIQLVFITNTPKLPKKHQLLMKIAEKLPMVVSVMQNINAGKTSLIWGDQTTLLAGKPTITEELDGLVFDLSARAFFQLNPQQTKKLYRLAREALNLAPNETLVDAYSGVGTIGLSLADVAKEVRGMDTIPAAVADANANAQRNQITNAHYEVGEAEVLLPQWLASGFAPDAMVVDPPRTGLDNVLIDAILQSAPEKLVYISCNPSTLAQDLQALTRGYQVDYIQSIDMFPQTARCEAVVRFTKRH.

Residues 1–28 (MPQSNHYSHQSRSHNDRRRQQPDEKVQA) form a disordered region. One can recognise a TRAM domain in the interval 29-87 (TVNIGQRFPLTIRRLGINGEGIGYYKHVITFVKGALPEEVVVAEVTAVHPRYLEAKIRS). Residues glutamine 313, tyrosine 342, aspartate 363, and aspartate 411 each coordinate S-adenosyl-L-methionine. Catalysis depends on cysteine 438, which acts as the Nucleophile.

It belongs to the class I-like SAM-binding methyltransferase superfamily. RNA M5U methyltransferase family.

This is an uncharacterized protein from Lactiplantibacillus plantarum (strain ATCC BAA-793 / NCIMB 8826 / WCFS1) (Lactobacillus plantarum).